Reading from the N-terminus, the 178-residue chain is Large ribosomal subunit protein uL6 (178 aa).

The protein belongs to the universal ribosomal protein uL6 family. As to quaternary structure, part of the 50S ribosomal subunit.

Its function is as follows. This protein binds to the 23S rRNA, and is important in its secondary structure. It is located near the subunit interface in the base of the L7/L12 stalk, and near the tRNA binding site of the peptidyltransferase center. This chain is Large ribosomal subunit protein uL6, found in Opitutus terrae (strain DSM 11246 / JCM 15787 / PB90-1).